A 374-amino-acid chain; its full sequence is uncharacterized protein (374 aa).

An N-terminal signal peptide occupies residues 1–21 (MSIISRVCIPCAVLLFAQLHA). One can recognise a Fibronectin type-III domain in the interval 22–102 (KELVHVSQLK…ASASAWTSLS (81 aa)).

This is an uncharacterized protein from Treponema pallidum (strain Nichols).